The following is a 200-amino-acid chain: 3-isopropylmalate dehydratase small subunit (200 aa).

It belongs to the LeuD family. LeuD type 1 subfamily. As to quaternary structure, heterodimer of LeuC and LeuD.

The enzyme catalyses (2R,3S)-3-isopropylmalate = (2S)-2-isopropylmalate. It participates in amino-acid biosynthesis; L-leucine biosynthesis; L-leucine from 3-methyl-2-oxobutanoate: step 2/4. Functionally, catalyzes the isomerization between 2-isopropylmalate and 3-isopropylmalate, via the formation of 2-isopropylmaleate. The polypeptide is 3-isopropylmalate dehydratase small subunit (Haemophilus influenzae (strain PittEE)).